We begin with the raw amino-acid sequence, 271 residues long: Cobalt import ATP-binding protein CbiO (271 aa).

In terms of domain architecture, ABC transporter spans 2-236; sequence LATSDLWFRY…TEAMEHAGLT (235 aa). An ATP-binding site is contributed by 34–41; the sequence is GANGCGKS.

The protein belongs to the ABC transporter superfamily. Cobalt importer (TC 3.A.1.18.1) family. In terms of assembly, forms an energy-coupling factor (ECF) transporter complex composed of an ATP-binding protein (A component, CbiO), a transmembrane protein (T component, CbiQ) and 2 possible substrate-capture proteins (S components, CbiM and CbiN) of unknown stoichimetry.

It is found in the cell inner membrane. It participates in cofactor biosynthesis; adenosylcobalamin biosynthesis. Its function is as follows. Part of the energy-coupling factor (ECF) transporter complex CbiMNOQ involved in cobalt import. Presumably responsible for energy coupling to the transport system. This is Cobalt import ATP-binding protein CbiO from Salmonella typhi.